A 305-amino-acid chain; its full sequence is Sulfate adenylyltransferase subunit 2 (305 aa).

It belongs to the PAPS reductase family. CysD subfamily. In terms of assembly, heterodimer composed of CysD, the smaller subunit, and CysN.

It catalyses the reaction sulfate + ATP + H(+) = adenosine 5'-phosphosulfate + diphosphate. It participates in sulfur metabolism; hydrogen sulfide biosynthesis; sulfite from sulfate: step 1/3. With CysN forms the ATP sulfurylase (ATPS) that catalyzes the adenylation of sulfate producing adenosine 5'-phosphosulfate (APS) and diphosphate, the first enzymatic step in sulfur assimilation pathway. APS synthesis involves the formation of a high-energy phosphoric-sulfuric acid anhydride bond driven by GTP hydrolysis by CysN coupled to ATP hydrolysis by CysD. This Pseudomonas fluorescens (strain SBW25) protein is Sulfate adenylyltransferase subunit 2.